Consider the following 29-residue polypeptide: Probable small toxic protein BsrH (29 aa).

The helical transmembrane segment at 6–26 (FQALMLMLAFGSFIIALLTYI) threads the bilayer.

It is found in the cell membrane. Its function is as follows. Possible toxic component of a type I toxin-antitoxin (TA) system; an overlapping antisense RNA has been identified. This is Probable small toxic protein BsrH from Bacillus subtilis (strain 168).